The primary structure comprises 466 residues: 3-isopropylmalate dehydratase large subunit (466 aa).

The [4Fe-4S] cluster site is built by cysteine 347, cysteine 407, and cysteine 410.

This sequence belongs to the aconitase/IPM isomerase family. LeuC type 1 subfamily. As to quaternary structure, heterodimer of LeuC and LeuD. Requires [4Fe-4S] cluster as cofactor.

The catalysed reaction is (2R,3S)-3-isopropylmalate = (2S)-2-isopropylmalate. It functions in the pathway amino-acid biosynthesis; L-leucine biosynthesis; L-leucine from 3-methyl-2-oxobutanoate: step 2/4. In terms of biological role, catalyzes the isomerization between 2-isopropylmalate and 3-isopropylmalate, via the formation of 2-isopropylmaleate. This chain is 3-isopropylmalate dehydratase large subunit, found in Shigella sonnei (strain Ss046).